Consider the following 231-residue polypeptide: Small ribosomal subunit protein uS3 (231 aa).

One can recognise a KH type-2 domain in the interval I39 to K108.

The protein belongs to the universal ribosomal protein uS3 family. As to quaternary structure, part of the 30S ribosomal subunit. Forms a tight complex with proteins S10 and S14.

Its function is as follows. Binds the lower part of the 30S subunit head. Binds mRNA in the 70S ribosome, positioning it for translation. The polypeptide is Small ribosomal subunit protein uS3 (Aquifex pyrophilus).